Here is an 847-residue protein sequence, read N- to C-terminus: B-cell receptor CD22 (847 aa).

An N-terminal signal peptide occupies residues 1-19; sequence MHLLGPWLLLLVLEYLAFS. Residues 20–138 enclose the Ig-like V-type domain; sequence DSSKWAFEHP…MERIHLNVSE (119 aa). The Extracellular segment spans residues 20–687; the sequence is DSSKWAFEHP…YYSPETIGRR (668 aa). 3 N-linked (GlcNAc...) asparagine glycosylation sites follow: asparagine 67, asparagine 101, and asparagine 112. Arginine 120 is an N-acetylneuraminate binding site. N-linked (GlcNAc...) asparagine glycosylation is found at asparagine 135, asparagine 164, and asparagine 231. Ig-like C2-type domains are found at residues 143–235, 242–326, 331–416, 419–500, 505–582, and 593–676; these read PHIQ…DTVQ, PKLE…VFLQ, PEPS…LDVQ, PKKV…VALN, PRDV…QTAS, and PRRL…STLT. An intrachain disulfide couples cysteine 161 to cysteine 219. Intrachain disulfides connect cysteine 265-cysteine 309 and cysteine 353-cysteine 396. N-linked (GlcNAc...) asparagine glycosylation is found at asparagine 363, asparagine 428, asparagine 445, asparagine 448, and asparagine 479. 2 disulfides stabilise this stretch: cysteine 442–cysteine 484 and cysteine 529–cysteine 571. Asparagine 574 and asparagine 634 each carry an N-linked (GlcNAc...) asparagine glycan. A disulfide bond links cysteine 616 and cysteine 659. A helical transmembrane segment spans residues 688 to 708; it reads VAVGFGSCLAILILAICGLKL. Residues 709–847 lie on the Cytoplasmic side of the membrane; it reads QRRWKRTQSQ…ENVDYVILKH (139 aa). Serine 725, serine 726, and serine 729 each carry phosphoserine. Short sequence motifs (ITIM motif) lie at residues 760-765 and 794-799; these read ISYTTL and VTYSVL. A Phosphotyrosine modification is found at tyrosine 762. 3 positions are modified to phosphotyrosine: tyrosine 807, tyrosine 822, and tyrosine 842. 2 consecutive short sequence motifs (ITIM motif) follow at residues 820–825 and 840–845; these read IHYSEL and VDYVIL.

It belongs to the immunoglobulin superfamily. SIGLEC (sialic acid binding Ig-like lectin) family. Predominantly monomer of isoform CD22-beta. Also found as heterodimer of isoform CD22-beta and a shorter isoform. Interacts with PTPN6/SHP-1, LYN, SYK, PIK3R1/PIK3R2 and PLCG1 upon phosphorylation. Interacts with GRB2, INPP5D and SHC1 upon phosphorylation. May form a complex with INPP5D/SHIP, GRB2 and SHC1. Phosphorylation of Tyr-762, Tyr-807 and Tyr-822 are involved in binding to SYK, GRB2 and SYK, respectively. Phosphorylation of Tyr-842 is involved in binding to SYK, PLCG2 and PIK3R1/PIK3R2. Post-translationally, phosphorylated on tyrosine residues by LYN.

It is found in the cell membrane. In terms of biological role, most highly expressed siglec (sialic acid-binding immunoglobulin-like lectin) on B-cells that plays a role in various aspects of B-cell biology including differentiation, antigen presentation, and trafficking to bone marrow. Binds to alpha 2,6-linked sialic acid residues of surface molecules such as CD22 itself, CD45 and IgM in a cis configuration. Can also bind to ligands on other cells as an adhesion molecule in a trans configuration. Acts as an inhibitory coreceptor on the surface of B-cells and inhibits B-cell receptor induced signaling, characterized by inhibition of the calcium mobilization and cellular activation. Mechanistically, the immunoreceptor tyrosine-based inhibitory motif domain is phosphorylated by the Src kinase LYN, which in turn leads to the recruitment of the protein tyrosine phosphatase 1/PTPN6, leading to the negative regulation of BCR signaling. If this negative signaling from is of sufficient strength, apoptosis of the B-cell can be induced. In Pan troglodytes (Chimpanzee), this protein is B-cell receptor CD22.